The following is a 600-amino-acid chain: Malto-oligosyltrehalose trehalohydrolase (600 aa).

A disordered region spans residues 1–34 (MTQTQPVTPTPPASFQTQHDPRTRLGATPLPGGA). 273–278 (RLDATP) lines the substrate pocket. Residue D275 is the Nucleophile of the active site. The active-site Proton donor is the E308. Residues 328 to 332 (DDFHH), E376, and 399 to 404 (HDQIGN) contribute to the substrate site.

It belongs to the glycosyl hydrolase 13 family. In terms of assembly, monomer.

It is found in the cytoplasm. It catalyses the reaction hydrolysis of (1-&gt;4)-alpha-D-glucosidic linkage in 4-alpha-D-[(1-&gt;4)-alpha-D-glucanosyl]n trehalose to yield trehalose and (1-&gt;4)-alpha-D-glucan.. It participates in glycan biosynthesis; trehalose biosynthesis. This chain is Malto-oligosyltrehalose trehalohydrolase (treZ), found in Deinococcus radiodurans (strain ATCC 13939 / DSM 20539 / JCM 16871 / CCUG 27074 / LMG 4051 / NBRC 15346 / NCIMB 9279 / VKM B-1422 / R1).